The following is a 235-amino-acid chain: Claudin-16 (235 aa).

Topologically, residues 1-3 are cytoplasmic; that stretch reads MRD. The helical transmembrane segment at 4–24 threads the bilayer; the sequence is LLQYIACFFAFFSAGFLIVAT. The Extracellular portion of the chain corresponds to 25–79; the sequence is WTDCWMVNADDSLEVSTKCRGLWWECVTNAFDGIRTCDEYDSILAEHPLKLVVTR. A helical membrane pass occupies residues 80-100; that stretch reads ALMITADILAGFGFLTLLLGL. Over 101 to 115 the chain is Cytoplasmic; it reads DCVKFLPDEPYIKVR. Residues 116 to 136 traverse the membrane as a helical segment; that stretch reads ICFVAGATLLIAGTPGIIGSV. Topologically, residues 137–169 are extracellular; it reads WYAVDVYVERSTLVLHNIFLGIQYKFGWSCWLG. Residues 170 to 190 traverse the membrane as a helical segment; it reads MAGSLGCFLAGAVLTCCLYLF. The Cytoplasmic portion of the chain corresponds to 191-235; it reads KDVGPERNYPYSLRKAYSAAGVSMAKSYSAPRTETAKMYAVDTRV. An Interaction with TJP1 motif is present at residues 233 to 235; sequence TRV.

It belongs to the claudin family. As to quaternary structure, can form heteropolymeric tight junction strands with other claudins. Interacts with CLDN19. Interacts (via PDZ-binding motif TRV) with TJP1 (via PDZ domain). Cannot form tight junction strands on its own. As to expression, kidney-specific, including the thick ascending limb of Henle (TAL).

It is found in the cell junction. The protein localises to the tight junction. Its subcellular location is the cell membrane. It catalyses the reaction Mg(2+)(in) = Mg(2+)(out). The enzyme catalyses Ca(2+)(in) = Ca(2+)(out). It carries out the reaction Na(+)(in) = Na(+)(out). The catalysed reaction is K(+)(in) = K(+)(out). It catalyses the reaction Rb(+)(in) = Rb(+)(out). The enzyme catalyses Cs(+)(in) = Cs(+)(out). It carries out the reaction Li(+)(in) = Li(+)(out). Functionally, forms paracellular channels: coassembles with CLDN19 into tight junction strands with cation-selective channels through the strands, conveying epithelial permeability in a process known as paracellular tight junction permeability. Involved in the maintenance of ion gradients along the nephron. In the thick ascending limb (TAL) of Henle's loop, facilitates sodium paracellular permeability from the interstitial compartment to the lumen, contributing to the lumen-positive transepithelial potential that drives paracellular magnesium and calcium reabsorption. The chain is Claudin-16 from Homo sapiens (Human).